The following is a 349-amino-acid chain: 11-beta-hydroxysteroid dehydrogenase A (349 aa).

Residues 10 to 30 form a helical; Signal-anchor for type II membrane protein membrane-spanning segment; sequence LVAPPFTFFFLCLFLPPYWGL. The Proline-knob motif lies at 13 to 26; sequence PPFTFFFLCLFLPP. NADP(+) contacts are provided by residues 54–80, Asp105, and 132–135; these read GASS…SARR and NAAI. Residue Ser184 participates in substrate binding. Tyr197 serves as the catalytic Proton acceptor. NADP(+) contacts are provided by residues 197–201 and Lys201; that span reads YSASK.

The protein belongs to the short-chain dehydrogenases/reductases (SDR) family. As to expression, expressed in seeds (at protein level).

The protein resides in the lipid droplet. It is found in the membrane. The enzyme catalyses an 11beta-hydroxysteroid + NADP(+) = an 11-oxosteroid + NADPH + H(+). Functionally, has dehydrogenase activity against 11 beta-hydroxysteroid and 17 beta-hydroxysteroid. May be involved in signal transduction regulated by various sterols. In Arachis hypogaea (Peanut), this protein is 11-beta-hydroxysteroid dehydrogenase A.